The sequence spans 351 residues: UDP-3-O-acylglucosamine N-acyltransferase (351 aa).

Residue His-240 is the Proton acceptor of the active site.

Belongs to the transferase hexapeptide repeat family. LpxD subfamily. In terms of assembly, homotrimer.

It carries out the reaction a UDP-3-O-[(3R)-3-hydroxyacyl]-alpha-D-glucosamine + a (3R)-hydroxyacyl-[ACP] = a UDP-2-N,3-O-bis[(3R)-3-hydroxyacyl]-alpha-D-glucosamine + holo-[ACP] + H(+). Its pathway is bacterial outer membrane biogenesis; LPS lipid A biosynthesis. Functionally, catalyzes the N-acylation of UDP-3-O-acylglucosamine using 3-hydroxyacyl-ACP as the acyl donor. Is involved in the biosynthesis of lipid A, a phosphorylated glycolipid that anchors the lipopolysaccharide to the outer membrane of the cell. This is UDP-3-O-acylglucosamine N-acyltransferase from Pseudomonas entomophila (strain L48).